A 362-amino-acid polypeptide reads, in one-letter code: Protein-glutamate methylesterase/protein-glutamine glutaminase 5 (362 aa).

The 118-residue stretch at R13–R130 folds into the Response regulatory domain. At D64 the chain carries 4-aspartylphosphate. The CheB-type methylesterase domain occupies L172–R362. Residues S184, H210, and D306 contribute to the active site.

Belongs to the CheB family. Phosphorylated by CheA. Phosphorylation of the N-terminal regulatory domain activates the methylesterase activity.

The protein localises to the cytoplasm. It catalyses the reaction [protein]-L-glutamate 5-O-methyl ester + H2O = L-glutamyl-[protein] + methanol + H(+). The enzyme catalyses L-glutaminyl-[protein] + H2O = L-glutamyl-[protein] + NH4(+). Involved in chemotaxis. Part of a chemotaxis signal transduction system that modulates chemotaxis in response to various stimuli. Catalyzes the demethylation of specific methylglutamate residues introduced into the chemoreceptors (methyl-accepting chemotaxis proteins or MCP) by CheR. Also mediates the irreversible deamidation of specific glutamine residues to glutamic acid. The chain is Protein-glutamate methylesterase/protein-glutamine glutaminase 5 from Anaeromyxobacter dehalogenans (strain 2CP-C).